The sequence spans 318 residues: L-lactate dehydrogenase (318 aa).

NAD(+) contacts are provided by residues Val18, Asp39, Lys44, Tyr69, and 83 to 84; that span reads GA. The substrate site is built by Gln86 and Arg92. NAD(+) is bound by residues Ser105, 122-124, and Ser147; that span reads VSN. Residue 124–127 coordinates substrate; it reads NPVD. 152–155 lines the substrate pocket; that stretch reads DTSR. The active-site Proton acceptor is the His179. At Tyr225 the chain carries Phosphotyrosine. Thr234 is a substrate binding site.

Belongs to the LDH/MDH superfamily. LDH family. As to quaternary structure, homotetramer.

Its subcellular location is the cytoplasm. The enzyme catalyses (S)-lactate + NAD(+) = pyruvate + NADH + H(+). The protein operates within fermentation; pyruvate fermentation to lactate; (S)-lactate from pyruvate: step 1/1. Functionally, catalyzes the conversion of lactate to pyruvate. This is L-lactate dehydrogenase from Clostridium botulinum (strain 657 / Type Ba4).